Here is a 333-residue protein sequence, read N- to C-terminus: Adenosine deaminase (333 aa).

Zn(2+) is bound by residues His12 and His14. Residues His14, Asp16, and Gly170 each coordinate substrate. Zn(2+) is bound at residue His197. The Proton donor role is filled by Glu200. Asp278 serves as a coordination point for Zn(2+). Asp279 lines the substrate pocket.

The protein belongs to the metallo-dependent hydrolases superfamily. Adenosine and AMP deaminases family. Adenosine deaminase subfamily. The cofactor is Zn(2+).

It catalyses the reaction adenosine + H2O + H(+) = inosine + NH4(+). The catalysed reaction is 2'-deoxyadenosine + H2O + H(+) = 2'-deoxyinosine + NH4(+). In terms of biological role, catalyzes the hydrolytic deamination of adenosine and 2-deoxyadenosine. The protein is Adenosine deaminase of Escherichia coli O139:H28 (strain E24377A / ETEC).